The following is a 297-amino-acid chain: Mycothiol acetyltransferase (297 aa).

2 N-acetyltransferase domains span residues 7–156 and 153–297; these read VFSD…VTIR and VTIR…PPPH. Glu-38 is a binding site for 1D-myo-inositol 2-(L-cysteinylamino)-2-deoxy-alpha-D-glucopyranoside. Residue 79 to 81 coordinates acetyl-CoA; it reads VVV. Positions 180, 219, and 227 each coordinate 1D-myo-inositol 2-(L-cysteinylamino)-2-deoxy-alpha-D-glucopyranoside. Residues 231–233 and 238–244 contribute to the acetyl-CoA site; these read VGV and QGLGLGR. Tyr-265 provides a ligand contact to 1D-myo-inositol 2-(L-cysteinylamino)-2-deoxy-alpha-D-glucopyranoside. 270-275 lines the acetyl-CoA pocket; that stretch reads NRPALR.

The protein belongs to the acetyltransferase family. MshD subfamily. As to quaternary structure, monomer.

The catalysed reaction is 1D-myo-inositol 2-(L-cysteinylamino)-2-deoxy-alpha-D-glucopyranoside + acetyl-CoA = mycothiol + CoA + H(+). Its function is as follows. Catalyzes the transfer of acetyl from acetyl-CoA to desacetylmycothiol (Cys-GlcN-Ins) to form mycothiol. This chain is Mycothiol acetyltransferase, found in Thermomonospora curvata (strain ATCC 19995 / DSM 43183 / JCM 3096 / KCTC 9072 / NBRC 15933 / NCIMB 10081 / Henssen B9).